The chain runs to 629 residues: Probable alpha-L-arabinofuranosidase A (629 aa).

The first 25 residues, 1–25 (MVALSTLSGLSALPFLFSLVQNVYG), serve as a signal peptide directing secretion. N-linked (GlcNAc...) asparagine glycosylation is found at asparagine 36, asparagine 51, asparagine 140, asparagine 152, asparagine 168, asparagine 171, asparagine 260, asparagine 494, and asparagine 534.

It belongs to the glycosyl hydrolase 51 family.

Its subcellular location is the secreted. The enzyme catalyses Hydrolysis of terminal non-reducing alpha-L-arabinofuranoside residues in alpha-L-arabinosides.. It participates in glycan metabolism; L-arabinan degradation. Functionally, alpha-L-arabinofuranosidase involved in the degradation of arabinoxylan, a major component of plant hemicellulose. Acts only on small linear 1,5-alpha-linked L-arabinofuranosyl oligosaccharides. The chain is Probable alpha-L-arabinofuranosidase A (abfA) from Aspergillus flavus (strain ATCC 200026 / FGSC A1120 / IAM 13836 / NRRL 3357 / JCM 12722 / SRRC 167).